We begin with the raw amino-acid sequence, 197 residues long: Protein-S-isoprenylcysteine O-methyltransferase A (197 aa).

Transmembrane regions (helical) follow at residues 16 to 36 (MLLSLIFFHISEYILAITIHG), 52 to 72 (ALAMLLSLLEYLTEIILFPGL), and 81 to 101 (FGLIMIIVGEIIRKAAIITAG). Residues 116–119 (HGLV), tyrosine 124, and 129–132 (HPSY) each bind S-adenosyl-L-methionine. A helical transmembrane segment spans residues 140–160 (VGTQVMLCNPVSAVAFAVVVW). A substrate-binding site is contributed by arginine 166. Glutamate 170 lines the S-adenosyl-L-methionine pocket.

This sequence belongs to the class VI-like SAM-binding methyltransferase superfamily. Isoprenylcysteine carboxyl methyltransferase family. It depends on Zn(2+) as a cofactor. As to expression, expressed primarily in flowers, stems, leaves and roots. Almost not expressed in siliques. Detected in root tips and vascular tissues of roots, cotyledons, petiols, hypocotyls, filaments, pollen grains and the distal and proximal portions of the gynoecium.

It is found in the endoplasmic reticulum membrane. It catalyses the reaction [protein]-C-terminal S-[(2E,6E)-farnesyl]-L-cysteine + S-adenosyl-L-methionine = [protein]-C-terminal S-[(2E,6E)-farnesyl]-L-cysteine methyl ester + S-adenosyl-L-homocysteine. Inhibited by farnesylthioacetic acid (FTAA) and N-acetyl-S-trans, trans-farnesyl-l-cysteine (AFC). Functionally, catalyzes the post-translational methylation of isoprenylated C-terminal cysteine residues, resulting in the modulation of the function of prenylated proteins. Involved in negative regulation of abscisic acid signaling. Carboxyl methylation is a reversible and potentially regulated step in the post-translational modification of prenylated proteins. The protein is Protein-S-isoprenylcysteine O-methyltransferase A of Arabidopsis thaliana (Mouse-ear cress).